The sequence spans 242 residues: Putative S-adenosyl-L-methionine-dependent methyltransferase Mmcs_0580 (242 aa).

Residues Asp104 and Asp134–Leu135 each bind S-adenosyl-L-methionine.

It belongs to the UPF0677 family.

Exhibits S-adenosyl-L-methionine-dependent methyltransferase activity. The protein is Putative S-adenosyl-L-methionine-dependent methyltransferase Mmcs_0580 of Mycobacterium sp. (strain MCS).